Consider the following 441-residue polypeptide: COP9 signalosome complex subunit 2 (441 aa).

The segment covering 1-23 has biased composition (acidic residues); sequence DMEDDFMCDDEEDYDLEYSEDSN. Residues 1 to 29 are disordered; the sequence is DMEDDFMCDDEEDYDLEYSEDSNSEPNVD. Positions 252-414 constitute a PCI domain; sequence AHTDFFEAFK…QLLELDHQKR (163 aa).

The protein belongs to the CSN2 family. As to quaternary structure, component of the CSN complex, probably composed of cops1, cops2, cops3, cops4, cops5, cops6, cops7, cops8 and cops9.

It localises to the cytoplasm. It is found in the nucleus. Its function is as follows. Essential component of the COP9 signalosome complex (CSN), a complex involved in various cellular and developmental processes. The CSN complex is an essential regulator of the ubiquitin (Ubl) conjugation pathway by mediating the deneddylation of the cullin subunits of E3 ligase complexes, leading to modify the Ubl ligase activity. This Xenopus laevis (African clawed frog) protein is COP9 signalosome complex subunit 2 (csn2).